The sequence spans 147 residues: Large ribosomal subunit protein bL9 (147 aa).

The protein belongs to the bacterial ribosomal protein bL9 family.

Functionally, binds to the 23S rRNA. The protein is Large ribosomal subunit protein bL9 of Helicobacter hepaticus (strain ATCC 51449 / 3B1).